We begin with the raw amino-acid sequence, 1728 residues long: MYNRCCRKVWIQGRVAYRPAYIRQSPPQQTLYRGIDLLPFTTIVMDHQSGFQNPSPSGGLMFSASAKRFISRIVGFVGRGAEVQQKAVGLCPLKTERRRAAAGGLLLPTGLRMGRSIIMSVRPLPFLTGPAPSPDTAAGFKPSPPTGNLVSVSPLSKAQMALWFDYLQHPTSTHYFLTLKVELDKQPLSLDKIIQVIRGLGKQHAMLRTTFHVDTDTDDMSKSYMAVHDDSWDQEIHVLMNDAQLYEALRKPFQLSSESPVRWVVQMKLQPGSARSTYTVYAAGHHIGVDGASMSVLSNQLLEAVASEVEDQPDHSGPHYGDYIQRQARYLRSSAGAAAGRFWLSQLRHTQPFRWRMEPPEEINTPNYRQLDTWNFFPTAEIQEWGNLYKTSWFRVATSIVGLVTAAMAEPQAHHDHALMVAFGARPRGFENNVSHMANTMPVKFPLSSLLRDDATFSDAVKAMGRNVSTAKKHENFPFMSLMEQANRHMDPTLLDFKVAITYSPKLANKSCELFPVEGIWDLFFCFLEQEDGVALGVISNPRVFGAEALGQLQSLFNEVFALSKARPSFKLSDLAFLQNRTPARFISGPALDDVESISKSRVYRLIKARAASQPDLVALMSAEKGVQMTYRELAAQSSQVAHFLQKQRLCKGDAVLVHLERGFAQIVWILGVMEAGACYVALDKTWPAARKEAILRTANGKLLVTDDEQMDFEKQDTTVVFLAPSAAEIASMPQSTCECEVADDDLAYVVFTSGSTGQPKGVMVEHSNLSHYVSATRSLVKTGPHSRMLQLASFAFDAIVLEYAVTLAHGGTLCFANHPEVLVGEYLADVIDSNQVNFFHCTPSVLSTLPAGRRLPSLRIVSVGGEASPPGLLDHWRKRVELLHAYGPTECTVICTLESLTQDESTQTAIDATVIGKALPNLDIRICEEGKLEPLAPNQVGEICVVGPQVSRGYMGQEELTASKFHNITLADGHPSRLYRTGDKGFIDDDGKLHIQGRIGNREIKVRGYRLDLYEVEKNVMAFDPEVTQVSIQQVGESLVALVVPASIDCDRIRSKLLKDMPRYAVPTRFIRVASLPLNTNGKIDHTQASSLAAELVMHDTVLPTVDATPTPTAAVRAVGVTEENLRLKTKENGMERQEMLRRHLTAEVTALWAKLLGSSRQFDPEVGFFDAGGHSLLLTQLHKLIKERFGTGSRPSLLDIFSMSSIRKQVDCLMGIVDQDAMLGSEPTGGSSSRSQSRRSAETSSSSTSAPSSVPVDAERNLYAIVGISCRFPGANTAEQLWNVLMEQRDAITTFCPAENLGFALEENSVFVPRYGMIDALKDFEPSAYSMSDAEAQTIDPQKRVFLDVAADALADAGTSASPGNPLDPVGVFVGAATNTFLSSRDNPGSKPPGDEEPQSFANHYQQLLDCPIGTFASFKLNLTGPVVTLNTACSSALAALHLACASLSHGDCNAAVVGGVSMAYPQEGGYVTARPGGDSSAVFSPSGVCHPLDSRADGCVPADGAAALVIKRLADARADGCRVYAVIEGVAVSADGSDDKAGLGVPSSSGQSRTVEAALRRAGPQALSRLRYVEMHGSGTPWGDALEVQGLKMAFDRLSKTGAAEQSGTGRAQPEADRIYLGSNKGNCGNTEAASGLLSLIKASMALNLGVVPPLPNLAEPNPKCEFEETKFEPLGKQLALAPGDRVMNKRQRIVRSPNWISDATWFVISTVDNLLPKLTPAAVA.

The segment at 153–499 (SPLSKAQMAL…MDPTLLDFKV (347 aa)) is condensation (C) domain. Residues 608–1002 (KARAASQPDL…KLHIQGRIGN (395 aa)) are adenylation (A) domain. Residues 1141–1219 (MLRRHLTAEV…KQVDCLMGIV (79 aa)) form the Carrier domain. Residue S1177 is modified to O-(pantetheine 4'-phosphoryl)serine. Positions 1225–1256 (LGSEPTGGSSSRSQSRRSAETSSSSTSAPSSV) are disordered. Low complexity-rich tracts occupy residues 1226–1237 (GSEPTGGSSSRS) and 1244–1255 (ETSSSSTSAPSS). Positions 1262-1714 (RNLYAIVGIS…SDATWFVIST (453 aa)) constitute a Ketosynthase family 3 (KS3) domain. Catalysis depends on for beta-ketoacyl synthase activity residues C1436, H1579, and N1633.

This sequence in the N-terminal section; belongs to the NRP synthetase family. The cofactor is pantetheine 4'-phosphate.

It carries out the reaction acetoacetyl-CoA + L-isoleucine + ATP = tenuazonic acid + AMP + diphosphate + CoA + 2 H(+). Hybrid PKS-NRPS synthetase that mediates the biosynthesis of the toxin tenuazonic acid (TeA), an inhibitor of protein biosynthesis on ribosomes by suppressing the release of new protein. TAS1 alone is sufficient for TeA synthesis via the condensation of isoleucine (Ile) with acetoacetyl-CoA by the N-terminal NRPS module and subsequent cyclization conducted by the C-terminal KS domain. This chain is Hybrid PKS-NRPS synthetase TAS1, found in Pyricularia oryzae (strain 70-15 / ATCC MYA-4617 / FGSC 8958) (Rice blast fungus).